The primary structure comprises 485 residues: WD repeat-containing protein 13 (485 aa).

Phosphoserine is present on residues serine 70, serine 74, and serine 79. Arginine 114 carries the post-translational modification Asymmetric dimethylarginine; alternate. Arginine 114 is subject to Omega-N-methylarginine; alternate. WD repeat units follow at residues 170–210 (HVDE…PTVL), 215–254 (GHTR…CIRE), 302–341 (KLTG…GKLT), 406–446 (HPVR…KAAV), and 451–484 (GHSA…RREQ).

Its subcellular location is the nucleus. The polypeptide is WD repeat-containing protein 13 (WDR13) (Pongo abelii (Sumatran orangutan)).